Consider the following 348-residue polypeptide: Doublesex- and mab-3-related transcription factor dmd-10 (348 aa).

DNA-binding regions (DM) lie at residues Cys-43 to Phe-91 and Cys-119 to Arg-166. The disordered stretch occupies residues Ser-316–Val-348.

Belongs to the DMRT family. Dimorphically expressed in the dimorphically connected interneuron AVG; expression is observed in the AVG in males, but not in hermaphrodites.

It is found in the nucleus. In terms of biological role, transcription factor. Plays a role in neuronal signaling in polymodal sensory neuron ASH, downstream of sensory receptor activation. Required for maintenance of AVG synapses. This is Doublesex- and mab-3-related transcription factor dmd-10 from Caenorhabditis elegans.